Here is a 449-residue protein sequence, read N- to C-terminus: Acetolactate synthase small subunit 1, chloroplastic (449 aa).

Residues 1-30 (MEHIQTRTTLSQLSTLPSDKRLGAIRFKCL) constitute a chloroplast transit peptide. ACT domains are found at residues 31-98 (LVMK…DLSK) and 259-333 (TLSM…DITH).

It belongs to the acetolactate synthase small subunit family. The acetolactate synthase complex contains both large catalytic subunits and small regulatory subunits.

The protein resides in the plastid. It is found in the chloroplast. It functions in the pathway amino-acid biosynthesis; L-isoleucine biosynthesis; L-isoleucine from 2-oxobutanoate: step 1/4. Its pathway is amino-acid biosynthesis; L-valine biosynthesis; L-valine from pyruvate: step 1/4. Its function is as follows. Regulatory subunit of acetohydroxy-acid synthase. Probably involved in feedback inhibition by branched-chain amino acids. Not involved in herbicide tolerance. The protein is Acetolactate synthase small subunit 1, chloroplastic of Nicotiana plumbaginifolia (Leadwort-leaved tobacco).